Reading from the N-terminus, the 260-residue chain is NAD-capped RNA hydrolase NudC (260 aa).

R69 is a substrate binding site. Residues C98 and C101 each coordinate Zn(2+). E111 lines the substrate pocket. 2 residues coordinate Zn(2+): C116 and C119. Y124 provides a ligand contact to substrate. The Nudix hydrolase domain occupies 125-248 (PQIAPCIIVA…TVARRLIEDT (124 aa)). 3 residues coordinate a divalent metal cation: A158, E174, and E178. Residues 159–180 (GFVEVGETLEQTVVREVMEESQ) carry the Nudix box motif. Position 192–199 (192–199 (QPWPFPHS)) interacts with substrate. An a divalent metal cation-binding site is contributed by E219. A substrate-binding site is contributed by A241.

This sequence belongs to the Nudix hydrolase family. NudC subfamily. Homodimer. The cofactor is Mg(2+). Mn(2+) serves as cofactor. Requires Zn(2+) as cofactor.

The enzyme catalyses a 5'-end NAD(+)-phospho-ribonucleoside in mRNA + H2O = a 5'-end phospho-adenosine-phospho-ribonucleoside in mRNA + beta-nicotinamide D-ribonucleotide + 2 H(+). The catalysed reaction is NAD(+) + H2O = beta-nicotinamide D-ribonucleotide + AMP + 2 H(+). It catalyses the reaction NADH + H2O = reduced beta-nicotinamide D-ribonucleotide + AMP + 2 H(+). In terms of biological role, mRNA decapping enzyme that specifically removes the nicotinamide adenine dinucleotide (NAD) cap from a subset of mRNAs by hydrolyzing the diphosphate linkage to produce nicotinamide mononucleotide (NMN) and 5' monophosphate mRNA. The NAD-cap is present at the 5'-end of some mRNAs and stabilizes RNA against 5'-processing. Has preference for mRNAs with a 5'-end purine. Catalyzes the hydrolysis of a broad range of dinucleotide pyrophosphates. This is NAD-capped RNA hydrolase NudC from Pectobacterium carotovorum subsp. carotovorum (strain PC1).